The chain runs to 1047 residues: Cation efflux system protein CusA (1047 aa).

A run of 12 helical transmembrane segments spans residues 14–34, 338–358, 363–383, 391–411, 446–466, 485–505, 532–552, 871–891, 898–918, 928–948, 985–1005, and 1012–1032; these read FLVL…IINT, LSGK…LFLW, ALVA…VMHF, MSLG…IVMI, VGPA…PIFT, AMAG…GYWI, VLHW…TVLW, KLKL…YLAF, LLII…LWWM, TGFI…LMYL, AMTV…TGAG, and IAAP…FIIP.

It belongs to the resistance-nodulation-cell division (RND) (TC 2.A.6) family. As to quaternary structure, the cus efflux system is composed of CusA, CusB, CusC and CusF.

The protein resides in the cell inner membrane. Functionally, part of a cation efflux system that mediates resistance to copper and silver. This Escherichia coli (strain K12) protein is Cation efflux system protein CusA (cusA).